We begin with the raw amino-acid sequence, 1214 residues long: Delta-latroinsectotoxin-Lt1a (1214 aa).

The segment at 64-89 is helix H2 is the probable transmembrane region of the tetrameric pore inserted in the target cell membrane; it reads IGSIPVIGEVVGIVTAPIAIVSHITS. The segment at 250-269 is helix H8 is the probable transmembrane region of the tetrameric pore inserted in the target cell membrane; the sequence is ALYALFYGTQTYAAVMFFLL. ANK repeat units follow at residues 464-497, 501-532, 536-565, 570-600, 604-633, 637-666, 670-699, 706-734, 740-769, 773-802, 806-835, 839-868, 872-901, 906-936, and 966-994; these read DIHR…DIEA, NDRS…DIEL, NGFT…DVNA, TNLT…KVNE, DGFT…DKNA, SGLT…DLNI, NHMA…KVSI, NNWT…DINL, GNLT…NIEE, EGYT…DIEA, DNLT…DIGA, DGST…NLKE, NKYL…SLKD, EGRT…TLDE, and VKPT…PEGS. Residues 1020-1214 constitute a propeptide, C-terminal domain cleavage is required for toxin activation; it reads IVKETNSRYL…IDVHQKMFLR (195 aa).

It belongs to the cationic peptide 01 (latrotoxin) family. 04 (delta-latroinsectotoxin) subfamily. In terms of assembly, homotetramer in membrane. Expressed by the venom gland.

It is found in the secreted. It localises to the target cell membrane. In terms of biological role, insecticidal presynaptic neurotoxin that induces massive neurotransmitter release at insect (but not vertebrate) neuromuscular junctions. Native toxin forms cation-permeable pores (with high permeability to calcium) in lipid membranes locust muscle membrane and artificial lipid bilayers. May bind to insect neurexin-1 homolog, insect adhesion G protein-coupled receptor L1 homolog, and insect receptor-type tyrosine-protein phosphatase S homolog, and induces neurotransmitter exocytosis both by forming tetrameric pores in membranes and signaling via G protein-coupled receptor. Oligomerization is a process independent of divalent cations. The sequence is that of Delta-latroinsectotoxin-Lt1a from Latrodectus tredecimguttatus (Mediterranean black widow spider).